A 653-amino-acid chain; its full sequence is 2-oxoglutarate oxidoreductase subunit KorA (653 aa).

The disordered stretch occupies residues 1–21; it reads MDPNGSGAGPESHDAAFHAAP. Residues 11–21 are compositionally biased toward basic and acidic residues; sequence ESHDAAFHAAP.

In terms of assembly, KG oxidoreductase (KOR) is composed of KorA and KorB subunits.

It carries out the reaction 2 oxidized [2Fe-2S]-[ferredoxin] + 2-oxoglutarate + CoA = succinyl-CoA + 2 reduced [2Fe-2S]-[ferredoxin] + CO2 + H(+). It participates in carbohydrate metabolism; tricarboxylic acid cycle. Component of KG oxidoreductase (KOR) that catalyzes the CoA-dependent oxidative decarboxylation of 2-oxoglutarate (alpha-ketoglutarate, KG) to succinyl-CoA. Methyl viologen can act as electron acceptor in vitro; the physiologic electron acceptor is unknown. Is involved in the alternative TCA pathway that functions concurrently with fatty acid beta-oxidation. Since a growing body of evidence indicates that lipids (for example cholesterol and fatty acids) are a predominant growth substrate for M.tuberculosis during infection, flux through KOR likely represents an important step in intermediary metabolism in vivo. KOR-dependent decarboxylation of KG also appears to be an important source of CO(2) in M.tuberculosis metabolism. This chain is 2-oxoglutarate oxidoreductase subunit KorA (korA), found in Mycobacterium tuberculosis (strain ATCC 25618 / H37Rv).